The following is a 153-amino-acid chain: Putative ATP synthase subunit f, mitochondrial (153 aa).

The protein belongs to the ATPase F chain family. In terms of assembly, subunit of the F-type ATPase which has 2 components, CF(1) - the catalytic core - and CF(0) - the membrane proton channel.

Its subcellular location is the mitochondrion membrane. Functionally, mitochondrial membrane ATP synthase (F(1)F(0) ATP synthase or Complex V) produces ATP from ADP in the presence of a proton gradient across the membrane which is generated by electron transport complexes of the respiratory chain. F-type ATPases consist of two structural domains, F(1) - containing the extramembraneous catalytic core and F(0) - containing the membrane proton channel, linked together by a central stalk and a peripheral stalk. During catalysis, ATP synthesis in the catalytic domain of F(1) is coupled via a rotary mechanism of the central stalk subunits to proton translocation. Part of the complex F(0) domain. Minor subunit located with subunit a in the membrane. This Caenorhabditis elegans protein is Putative ATP synthase subunit f, mitochondrial.